A 31-amino-acid polypeptide reads, in one-letter code: Cytochrome b6-f complex subunit 6 (31 aa).

The helical transmembrane segment at 7–25 (YSGFLLAAPIPASAPFTGL) threads the bilayer.

This sequence belongs to the PetL family. In terms of assembly, the 4 large subunits of the cytochrome b6-f complex are cytochrome b6, subunit IV (17 kDa polypeptide, PetD), cytochrome f and the Rieske protein, while the 4 small subunits are PetG, PetL, PetM and PetN. The complex functions as a dimer.

It localises to the plastid. The protein resides in the chloroplast thylakoid membrane. Functionally, component of the cytochrome b6-f complex, which mediates electron transfer between photosystem II (PSII) and photosystem I (PSI), cyclic electron flow around PSI, and state transitions. PetL is important for photoautotrophic growth as well as for electron transfer efficiency and stability of the cytochrome b6-f complex. The sequence is that of Cytochrome b6-f complex subunit 6 from Huperzia lucidula (Shining clubmoss).